The sequence spans 691 residues: Elongation factor G (691 aa).

The 276-residue stretch at 8–283 (EDYRNIGIMA…AVVDFLPSPL (276 aa)) folds into the tr-type G domain. GTP contacts are provided by residues 17-24 (AHIDAGKT), 81-85 (DTPGH), and 135-138 (NKMD).

This sequence belongs to the TRAFAC class translation factor GTPase superfamily. Classic translation factor GTPase family. EF-G/EF-2 subfamily.

The protein localises to the cytoplasm. Its function is as follows. Catalyzes the GTP-dependent ribosomal translocation step during translation elongation. During this step, the ribosome changes from the pre-translocational (PRE) to the post-translocational (POST) state as the newly formed A-site-bound peptidyl-tRNA and P-site-bound deacylated tRNA move to the P and E sites, respectively. Catalyzes the coordinated movement of the two tRNA molecules, the mRNA and conformational changes in the ribosome. This is Elongation factor G from Parvibaculum lavamentivorans (strain DS-1 / DSM 13023 / NCIMB 13966).